A 465-amino-acid chain; its full sequence is Pleckstrin homology domain-containing family S member 1 (465 aa).

Residues Glu-14–Gln-129 enclose the PH domain. The segment covering Pro-159 to Asn-173 has biased composition (polar residues). Disordered stretches follow at residues Pro-159–His-179 and Glu-258–His-283. Over residues Glu-258 to Pro-271 the composition is skewed to basic and acidic residues.

The chain is Pleckstrin homology domain-containing family S member 1 from Homo sapiens (Human).